A 450-amino-acid polypeptide reads, in one-letter code: Glucose-6-phosphate isomerase (450 aa).

Glu291 functions as the Proton donor in the catalytic mechanism. Residues His312 and Lys426 contribute to the active site.

It belongs to the GPI family.

It localises to the cytoplasm. It carries out the reaction alpha-D-glucose 6-phosphate = beta-D-fructose 6-phosphate. It participates in carbohydrate biosynthesis; gluconeogenesis. It functions in the pathway carbohydrate degradation; glycolysis; D-glyceraldehyde 3-phosphate and glycerone phosphate from D-glucose: step 2/4. Catalyzes the reversible isomerization of glucose-6-phosphate to fructose-6-phosphate. This chain is Glucose-6-phosphate isomerase, found in Clostridium botulinum (strain Hall / ATCC 3502 / NCTC 13319 / Type A).